Reading from the N-terminus, the 423-residue chain is UPF0229 protein VV1_2091 (423 aa).

A disordered region spans residues 81–111; sequence QFITGDKIERPKGGQGGGGAGDGDASADGEG. The span at 93 to 102 shows a compositional bias: gly residues; sequence GGQGGGGAGD.

Belongs to the UPF0229 family.

The polypeptide is UPF0229 protein VV1_2091 (Vibrio vulnificus (strain CMCP6)).